A 106-amino-acid polypeptide reads, in one-letter code: UPF0473 protein SSU98_0068 (106 aa).

This sequence belongs to the UPF0473 family.

This chain is UPF0473 protein SSU98_0068, found in Streptococcus suis (strain 98HAH33).